A 439-amino-acid polypeptide reads, in one-letter code: Ribosomal protein uS12 methylthiotransferase RimO (439 aa).

An MTTase N-terminal domain is found at 7–119 (KQLCLISLGC…IDIMIAKKQN (113 aa)). [4Fe-4S] cluster contacts are provided by cysteine 16, cysteine 50, cysteine 82, cysteine 151, cysteine 155, and cysteine 158. Residues 137 to 368 (TGSSVHAYVK…ALKHQNHSFK (232 aa)) form the Radical SAM core domain.

Belongs to the methylthiotransferase family. RimO subfamily. [4Fe-4S] cluster is required as a cofactor.

The protein localises to the cytoplasm. It carries out the reaction L-aspartate(89)-[ribosomal protein uS12]-hydrogen + (sulfur carrier)-SH + AH2 + 2 S-adenosyl-L-methionine = 3-methylsulfanyl-L-aspartate(89)-[ribosomal protein uS12]-hydrogen + (sulfur carrier)-H + 5'-deoxyadenosine + L-methionine + A + S-adenosyl-L-homocysteine + 2 H(+). Catalyzes the methylthiolation of an aspartic acid residue of ribosomal protein uS12. The polypeptide is Ribosomal protein uS12 methylthiotransferase RimO (Helicobacter pylori (strain G27)).